A 297-amino-acid polypeptide reads, in one-letter code: Protease HtpX homolog (297 aa).

Transmembrane regions (helical) follow at residues 14–34 and 39–59; these read VILL…AGYL and YQLG…SMIF. His143 lines the Zn(2+) pocket. The active site involves Glu144. Position 147 (His147) interacts with Zn(2+). The next 2 membrane-spanning stretches (helical) occupy residues 158–178 and 193–213; these read IAVA…RMMW and GFGA…PLAA. Glu225 provides a ligand contact to Zn(2+).

Belongs to the peptidase M48B family. The cofactor is Zn(2+).

It localises to the cell membrane. This Streptococcus equi subsp. equi (strain 4047) protein is Protease HtpX homolog.